A 273-amino-acid polypeptide reads, in one-letter code: tRNA pseudouridine synthase B (273 aa).

D38 acts as the Nucleophile in catalysis.

It belongs to the pseudouridine synthase TruB family. Type 1 subfamily.

The catalysed reaction is uridine(55) in tRNA = pseudouridine(55) in tRNA. In terms of biological role, responsible for synthesis of pseudouridine from uracil-55 in the psi GC loop of transfer RNAs. The protein is tRNA pseudouridine synthase B of Campylobacter concisus (strain 13826).